Consider the following 363-residue polypeptide: UDP-3-O-acylglucosamine N-acyltransferase (363 aa).

His-252 functions as the Proton acceptor in the catalytic mechanism.

This sequence belongs to the transferase hexapeptide repeat family. LpxD subfamily. In terms of assembly, homotrimer.

It carries out the reaction a UDP-3-O-[(3R)-3-hydroxyacyl]-alpha-D-glucosamine + a (3R)-hydroxyacyl-[ACP] = a UDP-2-N,3-O-bis[(3R)-3-hydroxyacyl]-alpha-D-glucosamine + holo-[ACP] + H(+). It functions in the pathway bacterial outer membrane biogenesis; LPS lipid A biosynthesis. Its function is as follows. Catalyzes the N-acylation of UDP-3-O-acylglucosamine using 3-hydroxyacyl-ACP as the acyl donor. Is involved in the biosynthesis of lipid A, a phosphorylated glycolipid that anchors the lipopolysaccharide to the outer membrane of the cell. The sequence is that of UDP-3-O-acylglucosamine N-acyltransferase from Cupriavidus taiwanensis (strain DSM 17343 / BCRC 17206 / CCUG 44338 / CIP 107171 / LMG 19424 / R1) (Ralstonia taiwanensis (strain LMG 19424)).